The primary structure comprises 192 residues: Xanthine phosphoribosyltransferase (192 aa).

Leucine 20 and asparagine 27 together coordinate xanthine. 128–132 (ANGDA) contacts 5-phospho-alpha-D-ribose 1-diphosphate. Lysine 156 serves as a coordination point for xanthine.

It belongs to the purine/pyrimidine phosphoribosyltransferase family. Xpt subfamily. Homodimer.

The protein resides in the cytoplasm. It carries out the reaction XMP + diphosphate = xanthine + 5-phospho-alpha-D-ribose 1-diphosphate. It functions in the pathway purine metabolism; XMP biosynthesis via salvage pathway; XMP from xanthine: step 1/1. Its function is as follows. Converts the preformed base xanthine, a product of nucleic acid breakdown, to xanthosine 5'-monophosphate (XMP), so it can be reused for RNA or DNA synthesis. This Staphylococcus carnosus (strain TM300) protein is Xanthine phosphoribosyltransferase.